The following is a 197-amino-acid chain: Holliday junction branch migration complex subunit RuvA (197 aa).

The tract at residues 1-64 (MIDSIVGTIQ…LSELECYGFL (64 aa)) is domain I. A domain II region spans residues 65 to 143 (TREERELFLK…KEFKVASTSG (79 aa)). A flexible linker region spans residues 144-152 (TEEKTYEKL). Residues 152–197 (LEEISLALLSLGYEIDEINQVLSSEDFSELSLEDGIKLALKKLSKI) form a domain III region.

Belongs to the RuvA family. Homotetramer. Forms an RuvA(8)-RuvB(12)-Holliday junction (HJ) complex. HJ DNA is sandwiched between 2 RuvA tetramers; dsDNA enters through RuvA and exits via RuvB. An RuvB hexamer assembles on each DNA strand where it exits the tetramer. Each RuvB hexamer is contacted by two RuvA subunits (via domain III) on 2 adjacent RuvB subunits; this complex drives branch migration. In the full resolvosome a probable DNA-RuvA(4)-RuvB(12)-RuvC(2) complex forms which resolves the HJ.

The protein localises to the cytoplasm. Its function is as follows. The RuvA-RuvB-RuvC complex processes Holliday junction (HJ) DNA during genetic recombination and DNA repair, while the RuvA-RuvB complex plays an important role in the rescue of blocked DNA replication forks via replication fork reversal (RFR). RuvA specifically binds to HJ cruciform DNA, conferring on it an open structure. The RuvB hexamer acts as an ATP-dependent pump, pulling dsDNA into and through the RuvAB complex. HJ branch migration allows RuvC to scan DNA until it finds its consensus sequence, where it cleaves and resolves the cruciform DNA. The polypeptide is Holliday junction branch migration complex subunit RuvA (Caldicellulosiruptor saccharolyticus (strain ATCC 43494 / DSM 8903 / Tp8T 6331)).